A 421-amino-acid chain; its full sequence is Probable indole-3-pyruvate monooxygenase YUCCA9 (421 aa).

29–34 (GAGPSG) lines the FAD pocket. An NADP(+)-binding site is contributed by 196 to 201 (GCGNSG).

It belongs to the FMO family. Requires FAD as cofactor.

It carries out the reaction indole-3-pyruvate + NADPH + O2 + H(+) = (indol-3-yl)acetate + CO2 + NADP(+) + H2O. Its pathway is plant hormone metabolism; auxin biosynthesis. In terms of biological role, involved in auxin biosynthesis. Belongs to the set of redundant YUCCA genes probably responsible for auxin biosynthesis in roots. The protein is Probable indole-3-pyruvate monooxygenase YUCCA9 (YUC9) of Arabidopsis thaliana (Mouse-ear cress).